The chain runs to 381 residues: Creatine kinase B-type (381 aa).

A Phosphoserine modification is found at Ser-4. One can recognise a Phosphagen kinase N-terminal domain in the interval 11 to 98 (KLRFPAEDEF…FDPIIEDRHG (88 aa)). At Thr-35 the chain carries Phosphothreonine. Lys-45 participates in a covalent cross-link: Glycyl lysine isopeptide (Lys-Gly) (interchain with G-Cter in ubiquitin). Val-72 provides a ligand contact to creatine. Residues 96 to 110 (RHGGYKPSDEHKTDL) show a composition bias toward basic and acidic residues. Residues 96–122 (RHGGYKPSDEHKTDLNPDNLQGGDDLD) form a disordered region. Residues Lys-101 and Lys-107 each participate in a glycyl lysine isopeptide (Lys-Gly) (interchain with G-Cter in ubiquitin) cross-link. Residue Tyr-125 is modified to Phosphotyrosine. The region spanning 125–367 (YVLSSRVRTG…KLLIEMEQRL (243 aa)) is the Phosphagen kinase C-terminal domain. ATP-binding positions include 128-132 (SSRVR), Arg-130, Arg-132, and His-191. The internal MTS-like signal stretch occupies residues 130–138 (RVRTGRSIR). Residue Ser-199 is modified to Phosphoserine. Glu-232 is a creatine binding site. Residue Arg-236 participates in ATP binding. Residue Tyr-269 is modified to 3'-nitrotyrosine. Ser-285 provides a ligand contact to creatine. Position 292 (Arg-292) interacts with ATP. Position 309 is a phosphoserine (Ser-309). ATP is bound by residues Arg-320, 320–325 (RGTGGV), and Asp-335. Thr-322 is subject to Phosphothreonine. Lys-381 participates in a covalent cross-link: Glycyl lysine isopeptide (Lys-Gly) (interchain with G-Cter in ubiquitin).

Belongs to the ATP:guanido phosphotransferase family. As to quaternary structure, dimer of identical or non-identical chains, which can be either B (brain type) or M (muscle type). With MM being the major form in skeletal muscle and myocardium, MB existing in myocardium, and BB existing in many tissues, especially brain. Interacts with SLC12A6 (via C-terminus); the interaction may be required for SLC12A6 potassium-chloride cotransport activity. In terms of processing, ubiquitinated by the ECS(ASB9) complex, leading to its degradation by the proteasome.

It localises to the cytoplasm. Its subcellular location is the cytosol. The protein resides in the mitochondrion. The protein localises to the cell membrane. The catalysed reaction is creatine + ATP = N-phosphocreatine + ADP + H(+). In terms of biological role, reversibly catalyzes the transfer of phosphate between ATP and various phosphogens (e.g. creatine phosphate). Creatine kinase isoenzymes play a central role in energy transduction in tissues with large, fluctuating energy demands, such as skeletal muscle, heart, brain and spermatozoa. Acts as a key regulator of adaptive thermogenesis as part of the futile creatine cycle: localizes to the mitochondria of thermogenic fat cells and acts by mediating phosphorylation of creatine to initiate a futile cycle of creatine phosphorylation and dephosphorylation. During the futile creatine cycle, creatine and N-phosphocreatine are in a futile cycle, which dissipates the high energy charge of N-phosphocreatine as heat without performing any mechanical or chemical work. This chain is Creatine kinase B-type, found in Homo sapiens (Human).